Reading from the N-terminus, the 113-residue chain is Putative pterin-4-alpha-carbinolamine dehydratase (113 aa).

Belongs to the pterin-4-alpha-carbinolamine dehydratase family.

The catalysed reaction is (4aS,6R)-4a-hydroxy-L-erythro-5,6,7,8-tetrahydrobiopterin = (6R)-L-erythro-6,7-dihydrobiopterin + H2O. The protein is Putative pterin-4-alpha-carbinolamine dehydratase of Nitrosospira multiformis (strain ATCC 25196 / NCIMB 11849 / C 71).